The following is a 301-amino-acid chain: Uricase-2 isozyme 2 (301 aa).

Residues Lys-17 and Thr-63 each act as charge relay system in the active site. The urate site is built by Thr-63, Asp-64, Phe-165, Arg-182, Val-237, Gln-238, and Asn-257. Residue His-259 is the Charge relay system of the active site. The short motif at Ser-299–Leu-301 is the Microbody targeting signal element.

The protein belongs to the uricase family.

It is found in the peroxisome. The enzyme catalyses urate + O2 + H2O = 5-hydroxyisourate + H2O2. The protein operates within purine metabolism; urate degradation; (S)-allantoin from urate: step 1/3. Catalyzes the oxidation of uric acid to 5-hydroxyisourate, which is further processed to form (S)-allantoin. The protein is Uricase-2 isozyme 2 of Canavalia lineata (Beach bean).